The primary structure comprises 293 residues: NAD kinase (293 aa).

The Proton acceptor role is filled by Asp74. Residues 74-75 (DG), Arg79, 148-149 (NE), Arg176, Asp178, 189-194 (TAYALS), and Gln248 each bind NAD(+).

The protein belongs to the NAD kinase family. A divalent metal cation is required as a cofactor.

It is found in the cytoplasm. The enzyme catalyses NAD(+) + ATP = ADP + NADP(+) + H(+). Involved in the regulation of the intracellular balance of NAD and NADP, and is a key enzyme in the biosynthesis of NADP. Catalyzes specifically the phosphorylation on 2'-hydroxyl of the adenosine moiety of NAD to yield NADP. In Blochmanniella floridana, this protein is NAD kinase.